We begin with the raw amino-acid sequence, 112 residues long: Putative pterin-4-alpha-carbinolamine dehydratase (112 aa).

Belongs to the pterin-4-alpha-carbinolamine dehydratase family.

The enzyme catalyses (4aS,6R)-4a-hydroxy-L-erythro-5,6,7,8-tetrahydrobiopterin = (6R)-L-erythro-6,7-dihydrobiopterin + H2O. The chain is Putative pterin-4-alpha-carbinolamine dehydratase from Shewanella loihica (strain ATCC BAA-1088 / PV-4).